Consider the following 398-residue polypeptide: L-talarate/galactarate dehydratase (398 aa).

Substrate is bound by residues 46–48 (DAK), 82–83 (KR), and Lys195. Residue Lys197 is the Proton acceptor of the active site. Position 226 (Asp226) interacts with Mg(2+). Residue Asn228 participates in substrate binding. Positions 252 and 278 each coordinate Mg(2+). His328 acts as the Proton donor/acceptor in catalysis. Glu348 provides a ligand contact to substrate.

It belongs to the mandelate racemase/muconate lactonizing enzyme family. Homooctamer; tetramer of dimers. Mg(2+) serves as cofactor.

It carries out the reaction L-altrarate = 5-dehydro-4-deoxy-D-glucarate + H2O. The catalysed reaction is galactarate = 5-dehydro-4-deoxy-D-glucarate + H2O. The enzyme catalyses L-altrarate = galactarate. Competitively inhibited by tartronate. Its function is as follows. Catalyzes the efficient dehydration of both L-talarate (also called L-altrarate) and galactarate to 5-keto-4-deoxy-D-glucarate (5-KDG). Also catalyzes the epimerization of L-talarate to galactarate; epimerization occurs in competition with dehydration. Is required for the utilization of L-talarate as a carbon source. Also functions in galactarate utilization. Is not active on other acid sugars. The chain is L-talarate/galactarate dehydratase from Salmonella typhimurium (strain LT2 / SGSC1412 / ATCC 700720).